A 298-amino-acid chain; its full sequence is tRNA pseudouridine synthase-like 1 (298 aa).

Catalysis depends on Asp60, which acts as the Nucleophile. Tyr124 serves as a coordination point for substrate.

It belongs to the tRNA pseudouridine synthase TruA family.

The enzyme catalyses a uridine in tRNA = a pseudouridine in tRNA. The sequence is that of tRNA pseudouridine synthase-like 1 (pusl1) from Xenopus laevis (African clawed frog).